Consider the following 285-residue polypeptide: Complement C1q tumor necrosis factor-related protein 2 (285 aa).

An N-terminal signal peptide occupies residues 1–15; it reads MIPWVLLACALPCAA. Residues 33–144 form a disordered region; the sequence is QLVCSLPGPQ…PGLPGPCSCG (112 aa). The region spanning 40–141 is the Collagen-like domain; sequence GPQGPPGPPG…KGEPGLPGPC (102 aa). Over residues 41 to 51 the composition is skewed to pro residues; it reads PQGPPGPPGAP. Residues 53–65 are compositionally biased toward low complexity; it reads PSGMMGRMGFPGK. The segment covering 66–78 has biased composition (basic and acidic residues); that stretch reads DGQDGHDGDRGDS. The segment covering 84 to 120 has biased composition (low complexity); the sequence is PGRTGNRGKPGPKGKAGAIGRAGPRGPKGVNGTPGKH. One can recognise a C1q domain in the interval 145-281; it reads SGHTKSAFSV…GFLIYADQDD (137 aa).

As to quaternary structure, may interact with ERFE. In terms of tissue distribution, expressed in adipose tissue.

It localises to the secreted. Involved in the regulation of lipid metabolism in adipose tissue and liver. This is Complement C1q tumor necrosis factor-related protein 2 (C1QTNF2) from Homo sapiens (Human).